The chain runs to 544 residues: High affinity immunoglobulin alpha and immunoglobulin mu Fc receptor (544 aa).

The first 16 residues, 1–16 (MPLFLILCLLQGSSFA), serve as a signal peptide directing secretion. Residues 17-462 (LPQKRPHPRW…TFPEDESSSR (446 aa)) are Extracellular-facing. Positions 61 to 169 (PNALKGSRLV…NMLFLSMNLT (109 aa)) constitute an Ig-like V-type domain. The tract at residues 75–97 (GGAVTIQCHYAPSSVNRHQRKYW) is mediates immunoglobulin Fc fragment-binding. Cysteine 82 and cysteine 153 are oxidised to a cystine. The N-linked (GlcNAc...) asparagine glycan is linked to asparagine 167. Positions 218–325 (DTVASTPGTS…TTKADRPRED (108 aa)) are disordered. 2 stretches are compositionally biased toward polar residues: residues 220–232 (VAST…TTAS) and 280–291 (ASKSRSMSNTTE). Over residues 307–325 (ASKDRREITTTKADRPRED) the composition is skewed to basic and acidic residues. A helical transmembrane segment spans residues 463–483 (TLAPVSTMLALFMLMALVLLQ). Topologically, residues 484-544 (RKLRRRRTSQ…LTAPERNPGP (61 aa)) are cytoplasmic. Positions 511-544 (PQPDQLPHVERKMLQDDSLPAGASLTAPERNPGP) are disordered.

In terms of assembly, interacts with IGHM; this interaction facilitates the endocytosis of IgM-coated microbes or IgM-antigen immune complexes. In terms of processing, N-glycosylated.

It localises to the cell membrane. Functions as a receptor for the Fc fragment of IgA and IgM. Binds IgA and IgM with high affinity and mediates their endocytosis. May function in the immune response to microbes mediated by IgA and IgM. This chain is High affinity immunoglobulin alpha and immunoglobulin mu Fc receptor (FCAMR), found in Pongo abelii (Sumatran orangutan).